A 396-amino-acid polypeptide reads, in one-letter code: Phosphoglycerate kinase (396 aa).

Substrate is bound by residues 21–23, arginine 36, 59–62, arginine 114, and arginine 147; these read DIN and HFGR. Residues lysine 197, glutamate 319, and 349–352 contribute to the ATP site; that span reads GGDT.

It belongs to the phosphoglycerate kinase family. As to quaternary structure, monomer.

Its subcellular location is the cytoplasm. The catalysed reaction is (2R)-3-phosphoglycerate + ATP = (2R)-3-phospho-glyceroyl phosphate + ADP. The protein operates within carbohydrate degradation; glycolysis; pyruvate from D-glyceraldehyde 3-phosphate: step 2/5. The polypeptide is Phosphoglycerate kinase (Jannaschia sp. (strain CCS1)).